An 881-amino-acid polypeptide reads, in one-letter code: Alanine--tRNA ligase (881 aa).

4 residues coordinate Zn(2+): histidine 564, histidine 568, cysteine 666, and histidine 670.

This sequence belongs to the class-II aminoacyl-tRNA synthetase family. It depends on Zn(2+) as a cofactor.

It localises to the cytoplasm. The enzyme catalyses tRNA(Ala) + L-alanine + ATP = L-alanyl-tRNA(Ala) + AMP + diphosphate. In terms of biological role, catalyzes the attachment of alanine to tRNA(Ala) in a two-step reaction: alanine is first activated by ATP to form Ala-AMP and then transferred to the acceptor end of tRNA(Ala). Also edits incorrectly charged Ser-tRNA(Ala) and Gly-tRNA(Ala) via its editing domain. This Caldicellulosiruptor saccharolyticus (strain ATCC 43494 / DSM 8903 / Tp8T 6331) protein is Alanine--tRNA ligase.